The following is a 555-amino-acid chain: Neutral amino acid transporter B(0) (555 aa).

M1 bears the N-acetylmethionine mark. Over 1 to 52 the chain is Cytoplasmic; it reads MAVDPPKADPKGVVAVDPTANCGSGLKSREDQGAKAGGCCSSRDQVCRCLRA. A helical membrane pass occupies residues 53-82; that stretch reads NLLVLLTVAAAVAGVVLGLGVSAAGGAEAL. Over 83-95 the chain is Extracellular; the sequence is GHARFTAFAFPGE. The helical transmembrane segment at 96 to 117 threads the bilayer; the sequence is LLLRLLEMIILPLVVCSLIGGA. Residues 118 to 131 are Cytoplasmic-facing; sequence ASLDPSALGRLGAW. The chain crosses the membrane as a helical span at residues 132 to 154; it reads ALLFFLVTTLLSSALGVALALAL. At 155-239 the chain is on the extracellular side; it reads KPGAAFAAIN…SNATMDQPHC (85 aa). Residues N164 and N231 are each glycosylated (N-linked (GlcNAc...) asparagine). A helical membrane pass occupies residues 240–262; the sequence is EMKMNILGLVVFAIVFGVALRKL. Residues 263-271 lie on the Cytoplasmic side of the membrane; it reads GPEGELLIR. A helical transmembrane segment spans residues 272–299; sequence FFNSFNDATMVLVSWIMWYAPIGILFLV. At 300–320 the chain is on the extracellular side; the sequence is AGKIVEMKDIRQLFIGLGKYI. A helical transmembrane segment spans residues 321 to 342; it reads VCCLLGHAIHGLLVLPLIYFLF. At 343-347 the chain is on the cytoplasmic side; it reads TRKNP. An intramembrane region (discontinuously helical) is located at residues 348–378; it reads YRFLWGIVTPLATAFGTSSSSATLPLMMKCV. The Cytoplasmic segment spans residues 379–387; the sequence is EEKNGVAKH. The chain crosses the membrane as a helical span at residues 388-414; it reads ISRFILPIGATVNMDGAALFQCVAAVF. Na(+) contacts are provided by G396, T398, and N400. Over 415–427 the chain is Extracellular; it reads IAQLNGMSLDFVK. The segment at residues 428 to 461 is an intramembrane region (discontinuously helical); it reads IITILVTATASSVGAAGIPAGGVLTLAIILEAIS. The Extracellular segment spans residues 462-474; sequence LPVKDISLILAVD. Residues 475–496 form a helical membrane-spanning segment; the sequence is WLVDRSCTVLNVEGDAFGAGLL. 2 residues coordinate Na(+): N485 and D489. At 497–555 the chain is on the cytoplasmic side; sequence QSYVDRTKMPSSEPELIQVKNDVSLKPLPLATEEGNPLLKQCREPSGDSSATCEKESVM. Residues S507, S508, S520, S545, and S553 each carry the phosphoserine modification. Residues 534-555 form a disordered region; it reads LLKQCREPSGDSSATCEKESVM.

This sequence belongs to the dicarboxylate/amino acid:cation symporter (DAACS) (TC 2.A.23) family. As to quaternary structure, homotrimer.

It is found in the cell membrane. Its subcellular location is the melanosome. The catalysed reaction is L-glutamine(out) + L-serine(in) + Na(+)(out) = L-glutamine(in) + L-serine(out) + Na(+)(in). It catalyses the reaction L-glutamine(in) + L-serine(out) + Na(+)(out) = L-glutamine(out) + L-serine(in) + Na(+)(in). It carries out the reaction L-threonine(in) + L-glutamine(out) + Na(+)(out) = L-threonine(out) + L-glutamine(in) + Na(+)(in). The enzyme catalyses L-threonine(out) + L-glutamine(in) + Na(+)(out) = L-threonine(in) + L-glutamine(out) + Na(+)(in). The catalysed reaction is L-asparagine(in) + L-glutamine(out) + Na(+)(out) = L-asparagine(out) + L-glutamine(in) + Na(+)(in). It catalyses the reaction L-asparagine(out) + L-glutamine(in) + Na(+)(out) = L-asparagine(in) + L-glutamine(out) + Na(+)(in). It carries out the reaction L-glutamine(in) + L-alanine(out) + Na(+)(out) = L-glutamine(out) + L-alanine(in) + Na(+)(in). The enzyme catalyses L-valine(out) + L-glutamine(in) + Na(+)(out) = L-valine(in) + L-glutamine(out) + Na(+)(in). The catalysed reaction is L-glutamine(in) + L-methionine(out) + Na(+)(out) = L-glutamine(out) + L-methionine(in) + Na(+)(in). It catalyses the reaction L-glutamine(in) + L-glutamate(out) + Na(+)(out) + H(+)(out) = L-glutamine(out) + L-glutamate(in) + Na(+)(in) + H(+)(in). It carries out the reaction D-serine(in) + L-glutamine(out) + Na(+)(out) = D-serine(out) + L-glutamine(in) + Na(+)(in). The enzyme catalyses D-serine(in) + L-alanine(out) + Na(+)(out) = D-serine(out) + L-alanine(in) + Na(+)(in). The catalysed reaction is nitrate(in) = nitrate(out). It catalyses the reaction iodide(out) = iodide(in). It carries out the reaction thiocyanate(in) = thiocyanate(out). Down-regulated at acidic pH. Sodium-coupled antiporter of neutral amino acids. In a tri-substrate transport cycle, exchanges neutral amino acids between the extracellular and intracellular compartments, coupled to the inward cotransport of at least one sodium ion. The preferred substrate is the essential amino acid L-glutamine, a precursor for biosynthesis of proteins, nucleotides and amine sugars as well as an alternative fuel for mitochondrial oxidative phosphorylation. Exchanges L-glutamine with other neutral amino acids such as L-serine, L-threonine and L-asparagine in a bidirectional way. Provides L-glutamine to proliferating stem and activated cells driving the metabolic switch toward cell differentiation. The transport cycle is usually pH-independent, with the exception of L-glutamate. Transports extracellular L-glutamate coupled to the cotransport of one proton and one sodium ion in exchange for intracellular L-glutamine counter-ion. May provide for L-glutamate uptake in glial cells regulating glutamine/glutamate cycle in the nervous system. Can transport D-amino acids. Mediates D-serine release from the retinal glia potentially affecting NMDA receptor function in retinal neurons. Displays sodium- and amino acid-dependent but uncoupled channel-like anion conductance with a preference SCN(-) &gt;&gt; NO3(-) &gt; I(-) &gt; Cl(-). Through binding of the fusogenic protein syncytin-1/ERVW-1 may mediate trophoblasts syncytialization, the spontaneous fusion of their plasma membranes, an essential process in placental development. The sequence is that of Neutral amino acid transporter B(0) (Slc1a5) from Rattus norvegicus (Rat).